The chain runs to 341 residues: Glycerol-3-phosphate dehydrogenase [NAD(P)+] (341 aa).

NADPH-binding residues include Ser13, Trp14, and Lys108. 3 residues coordinate sn-glycerol 3-phosphate: Lys108, Gly139, and Ser141. Ala143 lines the NADPH pocket. The sn-glycerol 3-phosphate site is built by Lys194, Asp247, Ser257, Arg258, and Asn259. Lys194 acts as the Proton acceptor in catalysis. Arg258 contacts NADPH. NADPH-binding residues include Val282 and Glu284.

The protein belongs to the NAD-dependent glycerol-3-phosphate dehydrogenase family.

The protein resides in the cytoplasm. The catalysed reaction is sn-glycerol 3-phosphate + NAD(+) = dihydroxyacetone phosphate + NADH + H(+). It carries out the reaction sn-glycerol 3-phosphate + NADP(+) = dihydroxyacetone phosphate + NADPH + H(+). The protein operates within membrane lipid metabolism; glycerophospholipid metabolism. In terms of biological role, catalyzes the reduction of the glycolytic intermediate dihydroxyacetone phosphate (DHAP) to sn-glycerol 3-phosphate (G3P), the key precursor for phospholipid synthesis. The protein is Glycerol-3-phosphate dehydrogenase [NAD(P)+] of Lactococcus lactis subsp. lactis (strain IL1403) (Streptococcus lactis).